A 640-amino-acid chain; its full sequence is Protein UL35 (640 aa).

3 disordered regions span residues 353–373 (ERGE…PREA), 500–571 (ASSS…PRQR), and 586–640 (AYSH…LRHL). Residues 358-367 (GDEDEEQEND) are compositionally biased toward acidic residues. Over residues 500–562 (ASSSSASSSS…LSGSHGISSA (63 aa)) the composition is skewed to low complexity. Positions 588-598 (SHHRRHRRRRS) are enriched in basic residues. The span at 631 to 640 (DDLAENLRHL) shows a compositional bias: basic and acidic residues.

The protein belongs to the herpesviridae pp85 family. As to quaternary structure, interacts with UL82. Interacts with isoform UL35A. Interacts with host UBP7; this interaction significantly inhibits the ability of USP7 to form nuclear bodies. Interacts with host DCAF1 (via C-terminus). Interacts with host SNX5; this interaction allows proper gB localization during viral assembly. Interacts with host TBK1; this interaction prevents type I interferon production. In terms of assembly, interacts with UL82. Interacts with isoform UL35. Interacts with host UBP7; this interaction significantly inhibits the ability of USP7 to form nuclear bodies. Interacts with host SNX5; this interaction allows proper gB localization during viral assembly.

Its subcellular location is the virion tegument. The protein resides in the host nucleus. The protein localises to the host cytoplasm. Functionally, plays important role in immediate-early gene expression through interaction with UL82. Forms nuclear bodies in host nucleus, independently of PML. In turn, UL35 nuclear bodies associate with and remodel PML bodies. Through interaction with host DCAF1, causes cells to accumulate in the G2 phase of the cell cycle by inducing a DNA damage response. Regulates viral assembly by controlling the localization of the essential gB through regulation of a retrograde transport pathway. This modulation occurs via binding and inhibition of host sorting nexin 5/SNX5. Also plays a role in the inhibition of pattern recognition receptor-mediated type I interferon signaling at the level of TBK1. In terms of biological role, promotes cytoplasmic UL82 accumulation and inhibits UL35-containing nuclear bodies formation. Regulates viral assembly by controlling the localization of the essential gB through regulation of a retrograde transport pathway. This modulation occurs via binding and inhibition of host sorting nexin 5/SNX5. The polypeptide is Protein UL35 (UL35) (Homo sapiens (Human)).